The following is a 61-amino-acid chain: Protein CopA/IncA (61 aa).

Controls the copy number in gene replication. In Escherichia coli, this protein is Protein CopA/IncA (copA).